A 209-amino-acid chain; its full sequence is MSRPVVVFEYGSGNVHSAVKALEAAGADVELTRDRRRAQEADGLVVPGVGAFAAVVDRLRAAHGDEIIERRLAGGRPVLGICVGMQVMFERGTEHGQETAGLGEWPGAVEPLCAGVVPHVGWNAVEAPADSVLFDGVWDERFYFVHSYAAQHWTLEATGPFPKPRVSWAEHGSRFVAAVENGPLSATQFHPEKSGSAGLRLLANWIGSL.

The region spanning 4–209 is the Glutamine amidotransferase type-1 domain; the sequence is PVVVFEYGSG…RLLANWIGSL (206 aa). Cysteine 82 serves as the catalytic Nucleophile. Catalysis depends on residues histidine 190 and glutamate 192.

As to quaternary structure, heterodimer of HisH and HisF.

Its subcellular location is the cytoplasm. It carries out the reaction 5-[(5-phospho-1-deoxy-D-ribulos-1-ylimino)methylamino]-1-(5-phospho-beta-D-ribosyl)imidazole-4-carboxamide + L-glutamine = D-erythro-1-(imidazol-4-yl)glycerol 3-phosphate + 5-amino-1-(5-phospho-beta-D-ribosyl)imidazole-4-carboxamide + L-glutamate + H(+). It catalyses the reaction L-glutamine + H2O = L-glutamate + NH4(+). The protein operates within amino-acid biosynthesis; L-histidine biosynthesis; L-histidine from 5-phospho-alpha-D-ribose 1-diphosphate: step 5/9. IGPS catalyzes the conversion of PRFAR and glutamine to IGP, AICAR and glutamate. The HisH subunit catalyzes the hydrolysis of glutamine to glutamate and ammonia as part of the synthesis of IGP and AICAR. The resulting ammonia molecule is channeled to the active site of HisF. This Leifsonia xyli subsp. xyli (strain CTCB07) protein is Imidazole glycerol phosphate synthase subunit HisH.